Here is a 421-residue protein sequence, read N- to C-terminus: Probable UDP-arabinose 4-epimerase 1 (421 aa).

Over 1–33 the chain is Cytoplasmic; the sequence is MLPTNRNRPQQRPARSWYFISDMDFSDPKRKPR. A helical; Signal-anchor for type II membrane protein membrane pass occupies residues 34–53; that stretch reads YLSKILMVALLTAMCVVMLT. Over 54–421 the chain is Lumenal; the sequence is QPPCHRRTPS…GYGPPQAMVL (368 aa). NAD(+) is bound at residue 74–105; sequence HVLVTGGAGYIGSHAALRLLKDSFRVTIVDNL. Catalysis depends on tyrosine 222, which acts as the Proton acceptor.

Belongs to the NAD(P)-dependent epimerase/dehydratase family. It depends on NAD(+) as a cofactor.

The protein localises to the golgi apparatus. Its subcellular location is the golgi stack membrane. It catalyses the reaction UDP-beta-L-arabinopyranose = UDP-alpha-D-xylose. The protein operates within nucleotide-sugar biosynthesis; UDP-L-arabinose biosynthesis; UDP-L-arabinose from UDP-alpha-D-xylose: step 1/1. It participates in cell wall biogenesis; cell wall polysaccharide biosynthesis. This is Probable UDP-arabinose 4-epimerase 1 (UEL-1) from Oryza sativa subsp. japonica (Rice).